The primary structure comprises 287 residues: ATP synthase gamma chain (287 aa).

It belongs to the ATPase gamma chain family. In terms of assembly, F-type ATPases have 2 components, CF(1) - the catalytic core - and CF(0) - the membrane proton channel. CF(1) has five subunits: alpha(3), beta(3), gamma(1), delta(1), epsilon(1). CF(0) has three main subunits: a, b and c.

The protein resides in the cell inner membrane. In terms of biological role, produces ATP from ADP in the presence of a proton gradient across the membrane. The gamma chain is believed to be important in regulating ATPase activity and the flow of protons through the CF(0) complex. The polypeptide is ATP synthase gamma chain (Marinobacter nauticus (strain ATCC 700491 / DSM 11845 / VT8) (Marinobacter aquaeolei)).